We begin with the raw amino-acid sequence, 25 residues long: Histone H1.1 (25 aa).

The H15 domain maps to 1 to 25 (MVSEAIAALKEREGSSEFAIGKKKE). A disordered region spans residues 1-25 (MVSEAIAALKEREGSSEFAIGKKKE). Over residues 9-25 (LKEREGSSEFAIGKKKE) the composition is skewed to basic and acidic residues.

Its subcellular location is the nucleus. It is found in the chromosome. Histones H1 are necessary for the condensation of nucleosome chains into higher-order structures. This is Histone H1.1 from Triticum aestivum (Wheat).